Reading from the N-terminus, the 180-residue chain is uncharacterized protein (180 aa).

This is an uncharacterized protein from Homo sapiens (Human).